The sequence spans 219 residues: Ribose-5-phosphate isomerase A (219 aa).

Residues 28-31 (SGST), 81-84 (DGAD), and 94-97 (KGGG) each bind substrate. The active-site Proton acceptor is the glutamate 103. Lysine 121 contacts substrate.

It belongs to the ribose 5-phosphate isomerase family. In terms of assembly, homodimer.

The catalysed reaction is aldehydo-D-ribose 5-phosphate = D-ribulose 5-phosphate. The protein operates within carbohydrate degradation; pentose phosphate pathway; D-ribose 5-phosphate from D-ribulose 5-phosphate (non-oxidative stage): step 1/1. Catalyzes the reversible conversion of ribose-5-phosphate to ribulose 5-phosphate. The polypeptide is Ribose-5-phosphate isomerase A (Actinobacillus pleuropneumoniae serotype 3 (strain JL03)).